The sequence spans 258 residues: Imidazole glycerol phosphate synthase subunit HisF (258 aa).

Catalysis depends on residues D11 and D130.

It belongs to the HisA/HisF family. In terms of assembly, heterodimer of HisH and HisF.

The protein localises to the cytoplasm. It catalyses the reaction 5-[(5-phospho-1-deoxy-D-ribulos-1-ylimino)methylamino]-1-(5-phospho-beta-D-ribosyl)imidazole-4-carboxamide + L-glutamine = D-erythro-1-(imidazol-4-yl)glycerol 3-phosphate + 5-amino-1-(5-phospho-beta-D-ribosyl)imidazole-4-carboxamide + L-glutamate + H(+). The protein operates within amino-acid biosynthesis; L-histidine biosynthesis; L-histidine from 5-phospho-alpha-D-ribose 1-diphosphate: step 5/9. Functionally, IGPS catalyzes the conversion of PRFAR and glutamine to IGP, AICAR and glutamate. The HisF subunit catalyzes the cyclization activity that produces IGP and AICAR from PRFAR using the ammonia provided by the HisH subunit. The protein is Imidazole glycerol phosphate synthase subunit HisF of Gluconacetobacter diazotrophicus (strain ATCC 49037 / DSM 5601 / CCUG 37298 / CIP 103539 / LMG 7603 / PAl5).